Here is a 2158-residue protein sequence, read N- to C-terminus: Non-reducing polyketide synthase Preu8 (2158 aa).

The N-terminal acylcarrier protein transacylase domain (SAT) stretch occupies residues 4–241; sequence LVLGDQVADH…TPIPVFAPYH (238 aa). In terms of domain architecture, Ketosynthase family 3 (KS3) spans 369-801; that stretch reads NDKIAIVGMS…GGNTAIILED (433 aa). Residues Cys-541, His-676, and His-719 each act as for beta-ketoacyl synthase activity in the active site. Positions 900 to 1215 are malonyl-CoA:ACP transacylase (MAT) domain; the sequence is FTFTGQGSQY…ANSVSTLFLA (316 aa). Ser-989 acts as the For acyl/malonyl transferase activity in catalysis. Positions 1285–1603 are product template (PT) domain; it reads SCQRIVREEL…RRVLNIMMPP (319 aa). An N-terminal hotdog fold region spans residues 1287 to 1423; that stretch reads QRIVREELHA…GTVKYEDVSQ (137 aa). The region spanning 1287–1598 is the PKS/mFAS DH domain; it reads QRIVREELHA…FQNIARRVLN (312 aa). His-1319 serves as the catalytic Proton acceptor; for dehydratase activity. The interval 1451–1598 is C-terminal hotdog fold; the sequence is AHKVLRGMAY…FQNIARRVLN (148 aa). Residue Asp-1511 is the Proton donor; for dehydratase activity of the active site. Low complexity predominate over residues 1619–1639; the sequence is KKAASPTLAPAKAAKPAAKTS. A disordered region spans residues 1619–1654; sequence KKAASPTLAPAKAAKPAAKTSKPSKARAKPAADSTT. The 75-residue stretch at 1651–1725 folds into the Carrier 1 domain; it reads DSTTSRVMKI…QMKKFFSQYD (75 aa). Ser-1685 is modified (O-(pantetheine 4'-phosphoryl)serine). The segment at 1723 to 1779 is disordered; it reads QYDGAPIPDDGDDSDGTDEPSNFSTPSYGADNASTPPSSAPSVNGKSSPENHEVLES. Residues 1731-1740 show a composition bias toward acidic residues; it reads DDGDDSDGTD. A compositionally biased stretch (polar residues) spans 1743–1770; sequence SNFSTPSYGADNASTPPSSAPSVNGKSS. The Carrier 2 domain occupies 1779 to 1853; sequence STEVSLARKI…DIENELGMRP (75 aa). An O-(pantetheine 4'-phosphoryl)serine modification is found at Ser-1813. The segment at 1847–1879 is disordered; the sequence is NELGMRPKPKPKAEAAPPKSSAKASPSANKQPQ. Residues 1860–1876 show a composition bias toward low complexity; it reads EAAPPKSSAKASPSANK. Positions 1894–2144 are thioesterase (TE) domain; it reads SQYPPANSVL…NHFTMMKGDH (251 aa).

It depends on pantetheine 4'-phosphate as a cofactor.

In terms of biological role, non-reducing polyketide synthase; part of a gene cluster that mediates the biosynthesis of a yet unidentified natural product. The chain is Non-reducing polyketide synthase Preu8 from Preussia isomera (Coprophilous fungus).